A 387-amino-acid chain; its full sequence is GDSL esterase/lipase At2g23540 (387 aa).

The first 32 residues, 1–32, serve as a signal peptide directing secretion; sequence MATRASTSSRVSPAFTFLVIFFLLSLTASVEA. The active-site Nucleophile is S55. Residues N139 and N159 are each glycosylated (N-linked (GlcNAc...) asparagine). Residues D352 and H355 contribute to the active site. Residue N380 is glycosylated (N-linked (GlcNAc...) asparagine).

Belongs to the 'GDSL' lipolytic enzyme family.

Its subcellular location is the secreted. In Arabidopsis thaliana (Mouse-ear cress), this protein is GDSL esterase/lipase At2g23540.